Here is a 201-residue protein sequence, read N- to C-terminus: 3-isopropylmalate dehydratase small subunit (201 aa).

The protein belongs to the LeuD family. LeuD type 1 subfamily. Heterodimer of LeuC and LeuD.

It catalyses the reaction (2R,3S)-3-isopropylmalate = (2S)-2-isopropylmalate. Its pathway is amino-acid biosynthesis; L-leucine biosynthesis; L-leucine from 3-methyl-2-oxobutanoate: step 2/4. Functionally, catalyzes the isomerization between 2-isopropylmalate and 3-isopropylmalate, via the formation of 2-isopropylmaleate. This is 3-isopropylmalate dehydratase small subunit from Agrobacterium fabrum (strain C58 / ATCC 33970) (Agrobacterium tumefaciens (strain C58)).